We begin with the raw amino-acid sequence, 523 residues long: Mitochondrial distribution and morphology protein 12 (523 aa).

Residues 1-483 enclose the SMP-LTD domain; the sequence is MSFDINWEKL…WPSWICVDMA (483 aa). Positions 108–117 are enriched in basic and acidic residues; the sequence is HEADIINDHD. Disordered stretches follow at residues 108–160, 178–213, 270–313, and 483–523; these read HEAD…QYDE, SASTPKRTSPQRPPLISPRGEVTQQTLSKPKEPFQS, KTKE…NAKN, and AEND…KKED. Composition is skewed to acidic residues over residues 118-140 and 148-158; these read YGDEDDIDDDYDNDSDDYDDDEN and EDEENEESSQY. Polar residues-rich tracts occupy residues 178–187 and 277–288; these read SASTPKRTSP and SGDQQQGKQTGK. The segment covering 289-313 has biased composition (basic and acidic residues); the sequence is ANEKGQKHKHEHEEEQGSDKQNAKN. Acidic residues predominate over residues 483–501; sequence AENDDEEEDDDDDDHDEDN. Residues 502 to 523 are compositionally biased toward basic and acidic residues; the sequence is EGRGRMRDTGDVDVRDHDKKED.

Belongs to the MDM12 family. As to quaternary structure, component of the ER-mitochondria encounter structure (ERMES) or MDM complex, composed of MMM1, MDM10, MDM12 and MDM34. An MMM1 homodimer associates with one molecule of MDM12 on each side in a pairwise head-to-tail manner, and the SMP-LTD domains of MMM1 and MDM12 generate a continuous hydrophobic tunnel for phospholipid trafficking.

The protein resides in the mitochondrion outer membrane. The protein localises to the endoplasmic reticulum membrane. Functionally, component of the ERMES/MDM complex, which serves as a molecular tether to connect the endoplasmic reticulum (ER) and mitochondria. Components of this complex are involved in the control of mitochondrial shape and protein biogenesis, and function in nonvesicular lipid trafficking between the ER and mitochondria. MDM12 is required for the interaction of the ER-resident membrane protein MMM1 and the outer mitochondrial membrane-resident beta-barrel protein MDM10. The MDM12-MMM1 subcomplex functions in the major beta-barrel assembly pathway that is responsible for biogenesis of all mitochondrial outer membrane beta-barrel proteins, and acts in a late step after the SAM complex. The MDM10-MDM12-MMM1 subcomplex further acts in the TOM40-specific pathway after the action of the MDM12-MMM1 complex. Essential for establishing and maintaining the structure of mitochondria and maintenance of mtDNA nucleoids. The polypeptide is Mitochondrial distribution and morphology protein 12 (Lodderomyces elongisporus (strain ATCC 11503 / CBS 2605 / JCM 1781 / NBRC 1676 / NRRL YB-4239) (Yeast)).